The chain runs to 300 residues: NAD kinase (300 aa).

Asp75 (proton acceptor) is an active-site residue. Residues 75–76 (DG), 149–150 (ND), Arg177, Asp179, 190–195 (TAYALS), Ala214, and Gln248 each bind NAD(+).

Belongs to the NAD kinase family. A divalent metal cation is required as a cofactor.

The protein resides in the cytoplasm. It catalyses the reaction NAD(+) + ATP = ADP + NADP(+) + H(+). Involved in the regulation of the intracellular balance of NAD and NADP, and is a key enzyme in the biosynthesis of NADP. Catalyzes specifically the phosphorylation on 2'-hydroxyl of the adenosine moiety of NAD to yield NADP. This is NAD kinase from Burkholderia orbicola (strain MC0-3).